The sequence spans 534 residues: Membrane protein insertase YidC (534 aa).

5 helical membrane-spanning segments follow: residues 7-27 (IIAV…SEYM), 319-339 (AIDL…LDFF), 342-362 (YVGN…LVFW), 413-433 (GGCL…QALL), and 493-513 (VMMF…SGLV).

The protein belongs to the OXA1/ALB3/YidC family. Type 1 subfamily. Interacts with the Sec translocase complex via SecD. Specifically interacts with transmembrane segments of nascent integral membrane proteins during membrane integration.

It is found in the cell inner membrane. In terms of biological role, required for the insertion and/or proper folding and/or complex formation of integral membrane proteins into the membrane. Involved in integration of membrane proteins that insert both dependently and independently of the Sec translocase complex, as well as at least some lipoproteins. Aids folding of multispanning membrane proteins. The protein is Membrane protein insertase YidC of Nitratidesulfovibrio vulgaris (strain ATCC 29579 / DSM 644 / CCUG 34227 / NCIMB 8303 / VKM B-1760 / Hildenborough) (Desulfovibrio vulgaris).